A 21-amino-acid polypeptide reads, in one-letter code: Protein IroK (21 aa).

Functionally, possible increased expression of this protein (due to mutations upstream of the start codon) is proposed to be responsible for resistance to 3-hydroxypropionic acid (3-HP). This chain is Protein IroK (iroK), found in Escherichia coli (strain K12).